The chain runs to 413 residues: 3-oxoacyl-[acyl-carrier-protein] synthase 2 (413 aa).

The region spanning Lys-3 to Lys-412 is the Ketosynthase family 3 (KS3) domain. Residues Cys-164, His-304, and His-341 each act as for beta-ketoacyl synthase activity in the active site.

This sequence belongs to the thiolase-like superfamily. Beta-ketoacyl-ACP synthases family. Homodimer.

It carries out the reaction a fatty acyl-[ACP] + malonyl-[ACP] + H(+) = a 3-oxoacyl-[ACP] + holo-[ACP] + CO2. The enzyme catalyses (9Z)-hexadecenoyl-[ACP] + malonyl-[ACP] + H(+) = 3-oxo-(11Z)-octadecenoyl-[ACP] + holo-[ACP] + CO2. The protein operates within lipid metabolism; fatty acid biosynthesis. In terms of biological role, involved in the type II fatty acid elongation cycle. Catalyzes the elongation of a wide range of acyl-ACP by the addition of two carbons from malonyl-ACP to an acyl acceptor. Can efficiently catalyze the conversion of palmitoleoyl-ACP (cis-hexadec-9-enoyl-ACP) to cis-vaccenoyl-ACP (cis-octadec-11-enoyl-ACP), an essential step in the thermal regulation of fatty acid composition. This is 3-oxoacyl-[acyl-carrier-protein] synthase 2 (fabF) from Escherichia coli O157:H7.